The following is a 426-amino-acid chain: Serine/threonine-protein kinase ssn3 (426 aa).

Residues 41–368 (YHIVGFISSG…AREALEHPYF (328 aa)) enclose the Protein kinase domain. ATP is bound by residues 47–55 (ISSGTYGRV) and K71. D173 functions as the Proton acceptor in the catalytic mechanism. A disordered region spans residues 390 to 426 (RVTQDDNDIRSGSLPGTKRSGLPDDSLMGRAAKRLKE).

This sequence belongs to the protein kinase superfamily. CMGC Ser/Thr protein kinase family. CDC2/CDKX subfamily. As to quaternary structure, component of the srb8-11 complex, a regulatory module of the Mediator complex. Mg(2+) serves as cofactor.

Its subcellular location is the nucleus. It carries out the reaction L-seryl-[protein] + ATP = O-phospho-L-seryl-[protein] + ADP + H(+). It catalyses the reaction L-threonyl-[protein] + ATP = O-phospho-L-threonyl-[protein] + ADP + H(+). The catalysed reaction is [DNA-directed RNA polymerase] + ATP = phospho-[DNA-directed RNA polymerase] + ADP + H(+). Component of the srb8-11 complex. The srb8-11 complex is a regulatory module of the Mediator complex which is itself involved in regulation of basal and activated RNA polymerase II-dependent transcription. The srb8-11 complex may be involved in the transcriptional repression of a subset of genes regulated by Mediator. It may inhibit the association of the Mediator complex with RNA polymerase II to form the holoenzyme complex. The srb8-11 complex phosphorylates the C-terminal domain (CTD) of the largest subunit of RNA polymerase II. This is Serine/threonine-protein kinase ssn3 (ssn3) from Aspergillus fumigatus (strain ATCC MYA-4609 / CBS 101355 / FGSC A1100 / Af293) (Neosartorya fumigata).